We begin with the raw amino-acid sequence, 138 residues long: uncharacterized protein (138 aa).

The protein to phage 186 CP81.

This is an uncharacterized protein from Salmonella typhimurium (strain LT2 / SGSC1412 / ATCC 700720).